The primary structure comprises 167 residues: Methyl-coenzyme M reductase II operon protein D (167 aa).

In terms of assembly, MCR is composed of three subunits: alpha, beta, and gamma. The function of protein D is not known.

The protein is Methyl-coenzyme M reductase II operon protein D (mrtD) of Methanocaldococcus jannaschii (strain ATCC 43067 / DSM 2661 / JAL-1 / JCM 10045 / NBRC 100440) (Methanococcus jannaschii).